A 472-amino-acid polypeptide reads, in one-letter code: Exodeoxyribonuclease 7 large subunit (472 aa).

It belongs to the XseA family. Heterooligomer composed of large and small subunits.

It is found in the cytoplasm. It catalyses the reaction Exonucleolytic cleavage in either 5'- to 3'- or 3'- to 5'-direction to yield nucleoside 5'-phosphates.. Bidirectionally degrades single-stranded DNA into large acid-insoluble oligonucleotides, which are then degraded further into small acid-soluble oligonucleotides. The chain is Exodeoxyribonuclease 7 large subunit from Carboxydothermus hydrogenoformans (strain ATCC BAA-161 / DSM 6008 / Z-2901).